We begin with the raw amino-acid sequence, 188 residues long: Putative ankyrin repeat protein FPV230 (188 aa).

ANK repeat units follow at residues 2-31, 36-65, 135-164, and 168-187; these read ENELKLYYAVSSQNENLVIQLLNKGYNPNA, KYMIPLHKAVECRNVDITKHLLSNGADANV, LGSTPLHIASKYNNKTMVKFFLERGADINI, and NNNTPLIYAVCSVIRLYLKC.

The sequence is that of Putative ankyrin repeat protein FPV230 from Vertebrata (FPV).